Reading from the N-terminus, the 133-residue chain is Profilin (133 aa).

Belongs to the profilin family. In terms of assembly, occurs in many kinds of cells as a complex with monomeric actin in a 1:1 ratio.

The protein resides in the cytoplasm. It localises to the cytoskeleton. Its function is as follows. Binds to actin and affects the structure of the cytoskeleton. At high concentrations, profilin prevents the polymerization of actin, whereas it enhances it at low concentrations. By binding to PIP2, it inhibits the formation of IP3 and DG. The sequence is that of Profilin from Helianthus annuus (Common sunflower).